The following is a 398-amino-acid chain: GPI mannosyltransferase 1 (398 aa).

The next 9 membrane-spanning stretches (helical) occupy residues 4 to 24 (LKYL…FGLY), 79 to 99 (WYHF…LIIL), 114 to 136 (MILS…GSAE), 156 to 176 (VILS…PIIY), 209 to 229 (IIIT…KYGW), 271 to 291 (IEKI…PLIF), 305 to 325 (FVFV…FLIF), 341 to 361 (ITGI…LYFA), and 375 to 395 (GLMY…MKFI).

Belongs to the PIGM family.

It localises to the endoplasmic reticulum membrane. It functions in the pathway glycolipid biosynthesis; glycosylphosphatidylinositol-anchor biosynthesis. Mannosyltransferase involved in glycosylphosphatidylinositol-anchor biosynthesis. Transfers the first alpha-1,4-mannose to GlcN-acyl-PI during GPI precursor assembly. Required for cell wall integrity. This is GPI mannosyltransferase 1 (GPI14) from Candida albicans (strain SC5314 / ATCC MYA-2876) (Yeast).